We begin with the raw amino-acid sequence, 748 residues long: Subtilisin-like protease (748 aa).

An N-terminal signal peptide occupies residues 1–24 (MMKMELRLLVSLIFILCSISMLAA). One can recognise an Inhibitor I9 domain in the interval 37–115 (TYIVHVKKSE…ARPERTLELH (79 aa)). In terms of domain architecture, Peptidase S8 spans 122 to 600 (FLGLKQGQGL…AGHVNPVKAN (479 aa)). Residues aspartate 147 and histidine 206 each act as charge relay system in the active site. A PA domain is found at 365–454 (PLVYPGSFGY…VEVSYAAGLT (90 aa)). N-linked (GlcNAc...) asparagine glycosylation is found at asparagine 376, asparagine 380, and asparagine 405. The active-site Charge relay system is serine 533. Residues asparagine 675 and asparagine 722 are each glycosylated (N-linked (GlcNAc...) asparagine).

Belongs to the peptidase S8 family.

It is found in the secreted. It localises to the extracellular space. The protein localises to the apoplast. Required for arbuscular mycorrhiza (AM) development during AM symbiosis with AM fungi (e.g. Glomeromycota intraradices). In Medicago truncatula (Barrel medic), this protein is Subtilisin-like protease.